The following is a 230-amino-acid chain: Cutinase 1 (230 aa).

The signal sequence occupies residues 1–16 (MKFFALTTLLAATASA). A propeptide spanning residues 17–31 (LPTSNPAQELEARQL) is cleaved from the precursor. Glycine 32 is subject to N-D-glucuronoyl glycine. Cysteine 47 and cysteine 125 are disulfide-bonded. Residue serine 136 is the Nucleophile of the active site. Cysteine 187 and cysteine 194 form a disulfide bridge. Aspartate 191 is an active-site residue. Histidine 204 functions as the Proton donor/acceptor in the catalytic mechanism.

This sequence belongs to the cutinase family. The 2 disulfide bonds play a critical role in holding the catalytic residues in juxta-position; reduction of the disulfide bridges results in the complete inactivation of the enzyme. In terms of processing, O-glycosylated; contains one mole each of mannose, arabinose, N-acetylglucosamine, and glucuronic acid.

The protein localises to the secreted. The enzyme catalyses cutin + H2O = cutin monomers.. Inhibited by n-undecyl phosphonate (C11Y4). Inhibited by paraoxon. In terms of biological role, catalyzes the hydrolysis of complex carboxylic polyesters found in the cell wall of plants. Degrades cutin, a macromolecule that forms the structure of the plant cuticle. Allows pathogenic fungi to penetrate through the cuticular barrier into the host plant during the initial stage of fungal infection. In Fusarium vanettenii (Neocosmospora pisi), this protein is Cutinase 1 (CUT1).